Consider the following 664-residue polypeptide: Glycine--tRNA ligase beta subunit (664 aa).

It belongs to the class-II aminoacyl-tRNA synthetase family. As to quaternary structure, tetramer of two alpha and two beta subunits.

The protein resides in the cytoplasm. The catalysed reaction is tRNA(Gly) + glycine + ATP = glycyl-tRNA(Gly) + AMP + diphosphate. The sequence is that of Glycine--tRNA ligase beta subunit from Rickettsia felis (strain ATCC VR-1525 / URRWXCal2) (Rickettsia azadi).